The sequence spans 215 residues: FGFR1 oncogene partner 2 homolog (215 aa).

The stretch at 35–183 (LLNKRVEAMK…SGLRELLGIS (149 aa)) forms a coiled coil.

It belongs to the SIKE family.

The protein localises to the cytoplasm. The protein is FGFR1 oncogene partner 2 homolog (fgfr1op2) of Danio rerio (Zebrafish).